Reading from the N-terminus, the 400-residue chain is Large envelope protein (400 aa).

Position 1 is an N-acetylmethionine (Met-1). The N-myristoyl glycine; by host moiety is linked to residue Gly-2. The pre-S1 stretch occupies residues 2–119 (GAPLSTTRRG…PPLRDTHPQA (118 aa)). The segment at 2–174 (GAPLSTTRRG…FSKTGGPAMN (173 aa)) is pre-S. The Virion surface; in external conformation portion of the chain corresponds to 2-181 (GAPLSTTRRG…AMNMDSITSG (180 aa)). The Intravirion; in internal conformation portion of the chain corresponds to 2–253 (GAPLSTTRRG…PGYRWMCLRR (252 aa)). Residue Pro-4 is glycosylated (N-linked (GlcNAc...) asparagine). Residues 84–114 (VLTTLPADPPPASTNRRSGRKPTPVSPPLRD) are disordered. The tract at residues 120–174 (MQWNSTQFHQALLDPRVRALYFPAGGSSSETQNPAPTIASLTSSIFSKTGGPAMN) is pre-S2. Residues 182-202 (LLGPLLVLQAVCFLLTKILTI) form a helical membrane-spanning segment. The Intravirion; in external conformation portion of the chain corresponds to 203–253 (PQSLDSWWTSLNFLGGLPGCPGQNSQSPTSNHLPTSCPPTCPGYRWMCLRR). Residues 254 to 274 (FIIFLFILLLCLIFLLVLLDY) form a helical membrane-spanning segment. Topologically, residues 275–348 (QGMLPVCPLI…WASARFSWLS (74 aa)) are virion surface. Residue Asn-320 is glycosylated (N-linked (GlcNAc...) asparagine; by host). A helical transmembrane segment spans residues 349-369 (LLVQFVQWCVGLSPTVWLLVI). The Intravirion portion of the chain corresponds to 370 to 375 (WMIWYW). The chain crosses the membrane as a helical span at residues 376–398 (GPNLCSILSPFIPLLPIFCYLWV). The Virion surface portion of the chain corresponds to 399 to 400 (SI).

It belongs to the orthohepadnavirus major surface antigen family. In its internal form (Li-HBsAg), interacts with the capsid protein and with the isoform S. Interacts with host chaperone CANX. In terms of assembly, associates with host chaperone CANX through its pre-S2 N glycan; this association may be essential for isoform M proper secretion. As to quaternary structure, interacts with isoform L. Interacts with the antigens of satellite virus HDV (HDVAgs); this interaction is required for encapsidation of HDV genomic RNA. Post-translationally, isoform M is N-terminally acetylated by host at a ratio of 90%, and N-glycosylated by host at the pre-S2 region. Myristoylated.

Its subcellular location is the virion membrane. In terms of biological role, the large envelope protein exists in two topological conformations, one which is termed 'external' or Le-HBsAg and the other 'internal' or Li-HBsAg. In its external conformation the protein attaches the virus to cell receptors and thereby initiating infection. This interaction determines the species specificity and liver tropism. This attachment induces virion internalization predominantly through caveolin-mediated endocytosis. The large envelope protein also assures fusion between virion membrane and endosomal membrane. In its internal conformation the protein plays a role in virion morphogenesis and mediates the contact with the nucleocapsid like a matrix protein. Its function is as follows. The middle envelope protein plays an important role in the budding of the virion. It is involved in the induction of budding in a nucleocapsid independent way. In this process the majority of envelope proteins bud to form subviral lipoprotein particles of 22 nm of diameter that do not contain a nucleocapsid. The chain is Large envelope protein from Homo sapiens (Human).